The primary structure comprises 134 residues: Protein Turandot E (134 aa).

Residues 1-38 (MSYNRTLHSTTSILKMNSALQISCLLLVLGCLLGSGHG) form the signal peptide.

Belongs to the Turandot family.

The protein resides in the secreted. Its function is as follows. A humoral factor that may play a role in stress tolerance. The polypeptide is Protein Turandot E (Drosophila yakuba (Fruit fly)).